A 239-amino-acid chain; its full sequence is Pyridoxine 5'-phosphate synthase (239 aa).

Asparagine 7 is a 3-amino-2-oxopropyl phosphate binding site. Residue 9-10 (DH) coordinates 1-deoxy-D-xylulose 5-phosphate. Residue arginine 18 participates in 3-amino-2-oxopropyl phosphate binding. Catalysis depends on histidine 43, which acts as the Proton acceptor. 1-deoxy-D-xylulose 5-phosphate contacts are provided by arginine 45 and histidine 50. Glutamate 70 acts as the Proton acceptor in catalysis. Threonine 100 is a binding site for 1-deoxy-D-xylulose 5-phosphate. The Proton donor role is filled by histidine 191. Residues glycine 192 and 213–214 (GH) each bind 3-amino-2-oxopropyl phosphate.

The protein belongs to the PNP synthase family. Homooctamer; tetramer of dimers.

It is found in the cytoplasm. The catalysed reaction is 3-amino-2-oxopropyl phosphate + 1-deoxy-D-xylulose 5-phosphate = pyridoxine 5'-phosphate + phosphate + 2 H2O + H(+). It participates in cofactor biosynthesis; pyridoxine 5'-phosphate biosynthesis; pyridoxine 5'-phosphate from D-erythrose 4-phosphate: step 5/5. In terms of biological role, catalyzes the complicated ring closure reaction between the two acyclic compounds 1-deoxy-D-xylulose-5-phosphate (DXP) and 3-amino-2-oxopropyl phosphate (1-amino-acetone-3-phosphate or AAP) to form pyridoxine 5'-phosphate (PNP) and inorganic phosphate. The polypeptide is Pyridoxine 5'-phosphate synthase (Geobacter sp. (strain M21)).